The following is an 82-amino-acid chain: T-complex protein 1 subunit gamma (82 aa).

Glycine 15 contacts ADP. Glycine 15 contributes to the ATP binding site. Position 66 (aspartate 66) interacts with Mg(2+). Residues glycine 67, threonine 68, threonine 69, and serine 70 each contribute to the ADP site. The ATP site is built by glycine 67, threonine 68, and threonine 69.

It belongs to the TCP-1 chaperonin family. In terms of assembly, component of the chaperonin-containing T-complex (TRiC), a hexadecamer composed of two identical back-to-back stacked rings enclosing a protein folding chamber. Each ring is made up of eight different subunits: TCP1/CCT1, CCT2, CCT3, CCT4, CCT5, CCT6A/CCT6, CCT7, CCT8. Interacts with PACRG. Interacts with DNAAF4. Interacts with DLEC1.

The protein localises to the cytoplasm. It catalyses the reaction ATP + H2O = ADP + phosphate + H(+). In terms of biological role, component of the chaperonin-containing T-complex (TRiC), a molecular chaperone complex that assists the folding of actin, tubulin and other proteins upon ATP hydrolysis. The TRiC complex mediates the folding of WRAP53/TCAB1, thereby regulating telomere maintenance. As part of the TRiC complex may play a role in the assembly of BBSome, a complex involved in ciliogenesis regulating transports vesicles to the cilia. This is T-complex protein 1 subunit gamma (CCT3) from Sus scrofa (Pig).